Reading from the N-terminus, the 225-residue chain is Small ribosomal subunit protein uS3 (225 aa).

Residues 18–87 form the KH type-2 domain; that stretch reads VDEYLAKQFY…NPQITVTSVE (70 aa).

The protein belongs to the universal ribosomal protein uS3 family. Part of the 30S ribosomal subunit.

Its function is as follows. Binds the lower part of the 30S subunit head. The chain is Small ribosomal subunit protein uS3 from Sulfurisphaera tokodaii (strain DSM 16993 / JCM 10545 / NBRC 100140 / 7) (Sulfolobus tokodaii).